A 152-amino-acid chain; its full sequence is SsrA-binding protein (152 aa).

Belongs to the SmpB family.

It is found in the cytoplasm. Functionally, required for rescue of stalled ribosomes mediated by trans-translation. Binds to transfer-messenger RNA (tmRNA), required for stable association of tmRNA with ribosomes. tmRNA and SmpB together mimic tRNA shape, replacing the anticodon stem-loop with SmpB. tmRNA is encoded by the ssrA gene; the 2 termini fold to resemble tRNA(Ala) and it encodes a 'tag peptide', a short internal open reading frame. During trans-translation Ala-aminoacylated tmRNA acts like a tRNA, entering the A-site of stalled ribosomes, displacing the stalled mRNA. The ribosome then switches to translate the ORF on the tmRNA; the nascent peptide is terminated with the 'tag peptide' encoded by the tmRNA and targeted for degradation. The ribosome is freed to recommence translation, which seems to be the essential function of trans-translation. This Gloeobacter violaceus (strain ATCC 29082 / PCC 7421) protein is SsrA-binding protein.